A 412-amino-acid polypeptide reads, in one-letter code: Putative competence-damage inducible protein (412 aa).

The protein belongs to the CinA family.

This is Putative competence-damage inducible protein from Bacillus cytotoxicus (strain DSM 22905 / CIP 110041 / 391-98 / NVH 391-98).